A 220-amino-acid polypeptide reads, in one-letter code: Guanylate kinase (220 aa).

Positions 15–194 constitute a Guanylate kinase-like domain; sequence GLMLVISSPS…AFEGIEAIVK (180 aa). 22–29 provides a ligand contact to ATP; sequence SPSGAGKS.

The protein belongs to the guanylate kinase family.

It is found in the cytoplasm. It catalyses the reaction GMP + ATP = GDP + ADP. Essential for recycling GMP and indirectly, cGMP. In Agrobacterium fabrum (strain C58 / ATCC 33970) (Agrobacterium tumefaciens (strain C58)), this protein is Guanylate kinase.